Consider the following 435-residue polypeptide: Probable tRNA pseudouridine synthase D (435 aa).

The active-site Nucleophile is the Asp-95. In terms of domain architecture, TRUD spans 170–396; it reads GVPNYFGTQR…SSGTRRAVLV (227 aa).

This sequence belongs to the pseudouridine synthase TruD family.

The enzyme catalyses uridine(13) in tRNA = pseudouridine(13) in tRNA. In terms of biological role, could be responsible for synthesis of pseudouridine from uracil-13 in transfer RNAs. The sequence is that of Probable tRNA pseudouridine synthase D from Natronomonas pharaonis (strain ATCC 35678 / DSM 2160 / CIP 103997 / JCM 8858 / NBRC 14720 / NCIMB 2260 / Gabara) (Halobacterium pharaonis).